The following is a 57-amino-acid chain: DNA-directed RNA polymerase subunit Rpo6 (57 aa).

It belongs to the archaeal Rpo6/eukaryotic RPB6 RNA polymerase subunit family. As to quaternary structure, part of the RNA polymerase complex.

It is found in the cytoplasm. It carries out the reaction RNA(n) + a ribonucleoside 5'-triphosphate = RNA(n+1) + diphosphate. Functionally, DNA-dependent RNA polymerase (RNAP) catalyzes the transcription of DNA into RNA using the four ribonucleoside triphosphates as substrates. The sequence is that of DNA-directed RNA polymerase subunit Rpo6 from Thermococcus gammatolerans (strain DSM 15229 / JCM 11827 / EJ3).